The primary structure comprises 224 residues: Deoxyribose-phosphate aldolase (224 aa).

The active-site Proton donor/acceptor is the D92. The Schiff-base intermediate with acetaldehyde role is filled by K155. K184 functions as the Proton donor/acceptor in the catalytic mechanism.

It belongs to the DeoC/FbaB aldolase family. DeoC type 1 subfamily.

Its subcellular location is the cytoplasm. The enzyme catalyses 2-deoxy-D-ribose 5-phosphate = D-glyceraldehyde 3-phosphate + acetaldehyde. It functions in the pathway carbohydrate degradation; 2-deoxy-D-ribose 1-phosphate degradation; D-glyceraldehyde 3-phosphate and acetaldehyde from 2-deoxy-alpha-D-ribose 1-phosphate: step 2/2. Its function is as follows. Catalyzes a reversible aldol reaction between acetaldehyde and D-glyceraldehyde 3-phosphate to generate 2-deoxy-D-ribose 5-phosphate. The sequence is that of Deoxyribose-phosphate aldolase from Halalkalibacterium halodurans (strain ATCC BAA-125 / DSM 18197 / FERM 7344 / JCM 9153 / C-125) (Bacillus halodurans).